Consider the following 207-residue polypeptide: LexA repressor (207 aa).

Residues 28–48 (VREIGEAVGLASSSTVHGHLA) constitute a DNA-binding region (H-T-H motif). Catalysis depends on for autocatalytic cleavage activity residues serine 129 and lysine 167.

It belongs to the peptidase S24 family. As to quaternary structure, homodimer.

The enzyme catalyses Hydrolysis of Ala-|-Gly bond in repressor LexA.. In terms of biological role, represses a number of genes involved in the response to DNA damage (SOS response), including recA and lexA. In the presence of single-stranded DNA, RecA interacts with LexA causing an autocatalytic cleavage which disrupts the DNA-binding part of LexA, leading to derepression of the SOS regulon and eventually DNA repair. In Brevibacillus brevis (strain 47 / JCM 6285 / NBRC 100599), this protein is LexA repressor.